The sequence spans 127 residues: Large ribosomal subunit protein bL17 (127 aa).

This sequence belongs to the bacterial ribosomal protein bL17 family. As to quaternary structure, part of the 50S ribosomal subunit. Contacts protein L32.

This chain is Large ribosomal subunit protein bL17, found in Lactobacillus johnsonii (strain CNCM I-12250 / La1 / NCC 533).